A 101-amino-acid chain; its full sequence is Large ribosomal subunit protein uL24 (101 aa).

Belongs to the universal ribosomal protein uL24 family. Part of the 50S ribosomal subunit.

In terms of biological role, one of two assembly initiator proteins, it binds directly to the 5'-end of the 23S rRNA, where it nucleates assembly of the 50S subunit. Its function is as follows. One of the proteins that surrounds the polypeptide exit tunnel on the outside of the subunit. The polypeptide is Large ribosomal subunit protein uL24 (Cereibacter sphaeroides (strain ATCC 17025 / ATH 2.4.3) (Rhodobacter sphaeroides)).